A 124-amino-acid chain; its full sequence is Large ribosomal subunit protein bL12 (124 aa).

The protein belongs to the bacterial ribosomal protein bL12 family. Homodimer. Part of the ribosomal stalk of the 50S ribosomal subunit. Forms a multimeric L10(L12)X complex, where L10 forms an elongated spine to which 2 to 4 L12 dimers bind in a sequential fashion. Binds GTP-bound translation factors.

In terms of biological role, forms part of the ribosomal stalk which helps the ribosome interact with GTP-bound translation factors. Is thus essential for accurate translation. This chain is Large ribosomal subunit protein bL12, found in Aromatoleum aromaticum (strain DSM 19018 / LMG 30748 / EbN1) (Azoarcus sp. (strain EbN1)).